Here is a 332-residue protein sequence, read N- to C-terminus: RNA polymerase principal sigma factor HrdD (332 aa).

A disordered region spans residues 1 to 21 (MATRAVARRQPAASGETGAAG). The Polymerase core binding signature appears at 124 to 137 (DLIQEGNAGLVRAV). The H-T-H motif DNA-binding region spans 294 to 313 (LTEVGKQHGLTRERIRQIEK).

The protein belongs to the sigma-70 factor family.

Its function is as follows. Sigma factors are initiation factors that promote the attachment of RNA polymerase to specific initiation sites and are then released. The polypeptide is RNA polymerase principal sigma factor HrdD (hrdD) (Streptomyces griseus).